The chain runs to 186 residues: Peptidyl-tRNA hydrolase (186 aa).

Y14 contacts tRNA. H19 serves as the catalytic Proton acceptor. Positions 64, 66, and 112 each coordinate tRNA.

This sequence belongs to the PTH family. As to quaternary structure, monomer.

It is found in the cytoplasm. The enzyme catalyses an N-acyl-L-alpha-aminoacyl-tRNA + H2O = an N-acyl-L-amino acid + a tRNA + H(+). Functionally, hydrolyzes ribosome-free peptidyl-tRNAs (with 1 or more amino acids incorporated), which drop off the ribosome during protein synthesis, or as a result of ribosome stalling. Catalyzes the release of premature peptidyl moieties from peptidyl-tRNA molecules trapped in stalled 50S ribosomal subunits, and thus maintains levels of free tRNAs and 50S ribosomes. The sequence is that of Peptidyl-tRNA hydrolase from Geobacillus kaustophilus (strain HTA426).